The chain runs to 141 residues: uncharacterized protein (141 aa).

Basic and acidic residues predominate over residues 1–17 (MNKSESENDSEYHKEYS). The disordered stretch occupies residues 1–24 (MNKSESENDSEYHKEYSESSDPED). A coiled-coil region spans residues 52 to 115 (IQNLNNNVKE…QMLFEKMRDM (64 aa)).

This is an uncharacterized protein from Acanthamoeba polyphaga (Amoeba).